A 4545-amino-acid chain; its full sequence is Prolow-density lipoprotein receptor-related protein 1 (4545 aa).

An N-terminal signal peptide occupies residues Met1–Gly19. At Ala20 to Ser4424 the chain is on the extracellular side. LDL-receptor class A domains follow at residues Thr27–Pro66 and Arg72–Arg110. Disulfide bonds link Cys28–Cys41, Cys35–Cys54, Cys48–Cys65, Cys73–Cys86, Cys80–Cys99, and Cys93–Cys109. N-linked (GlcNAc...) asparagine glycans are attached at residues Asn115, Asn137, Asn186, Asn240, and Asn275. LDL-receptor class B repeat units follow at residues Gly293–Met335, Gly336–Ser379, and Arg380–Tyr423. N-linked (GlcNAc...) asparagine glycosylation is present at Asn358. An N-linked (GlcNAc...) asparagine glycan is attached at Asn447. LDL-receptor class B repeat units follow at residues Gly572–Gly614, Asp615–Asn660, Gly661–Ala711, and Gly712–Tyr755. The HAT 1 repeat unit spans residues Thr639–Asp671. The N-linked (GlcNAc...) asparagine glycan is linked to Asn730. 8 consecutive LDL-receptor class A domains span residues Gln854–His892, Thr895–Ser933, Thr936–Ala973, Thr976–Ser1013, Ser1015–Thr1053, Gly1062–Glu1099, Val1104–Glu1142, and Ala1145–Asp1184. 24 cysteine pairs are disulfide-bonded: Cys855–Cys867, Cys862–Cys880, Cys874–Cys891, Cys896–Cys908, Cys903–Cys921, Cys915–Cys932, Cys937–Cys949, Cys944–Cys962, Cys956–Cys972, Cys977–Cys990, Cys985–Cys1003, Cys997–Cys1012, Cys1016–Cys1028, Cys1023–Cys1041, Cys1035–Cys1052, Cys1063–Cys1076, Cys1070–Cys1089, Cys1083–Cys1098, Cys1105–Cys1119, Cys1113–Cys1132, Cys1126–Cys1141, Cys1146–Cys1160, Cys1153–Cys1173, and Cys1167–Cys1183. Ca(2+)-binding residues include Trp872, Asp875, Asp877, Asp879, Asp885, and Glu886. N-linked (GlcNAc...) asparagine glycosylation is present at Asn929. Ca(2+)-binding residues include Trp1033, Asp1036, Asp1038, Asp1040, Asp1046, and Glu1047. A glycan (N-linked (GlcNAc...) asparagine) is linked at Asn1051. Residues Trp1081, Asp1084, Asp1086, Asp1088, Asp1094, and Glu1095 each contribute to the Ca(2+) site. An N-linked (GlcNAc...) asparagine glycan is attached at Asn1156. Residues Asn1196 and Asn1219 are each glycosylated (N-linked (GlcNAc...) asparagine). LDL-receptor class B repeat units follow at residues Ser1310–Ala1356, Gly1357–Asp1399, Gly1400–Glu1446, Lys1447–Glu1491, and Val1492–Ser1532. HAT repeat units lie at residues Thr1380–Arg1413 and Met1470–Ala1503. Asn1512, Asn1559, Asn1576, Asn1617, and Asn1646 each carry an N-linked (GlcNAc...) asparagine glycan. LDL-receptor class B repeat units lie at residues Gln1628–Ser1670, Arg1671–Arg1714, Gly1715–Glu1754, and Ser1755–Lys1799. One copy of the HAT 4 repeat lies at Val1653–Gln1684. 5 N-linked (GlcNAc...) asparagine glycosylation sites follow: Asn1724, Asn1734, Asn1764, Asn1826, and Asn1934. LDL-receptor class B repeat units lie at residues Asp1935–Ala1977, Gly1978–Lys2020, Gly2021–Gly2064, and Gly2065–Phe2108. A glycan (N-linked (GlcNAc...) asparagine) is linked at Asn1996. At Lys2010 the chain carries N6-acetyllysine. The N-linked (GlcNAc...) asparagine glycan is linked to Asn2049. Asn2118 and Asn2128 each carry an N-linked (GlcNAc...) asparagine glycan. LDL-receptor class B repeat units lie at residues Asn2254 to Trp2295, Asp2296 to Gln2344, Asn2345 to Ala2389, Glu2390 to His2432, and Ile2433 to Asp2474. HAT repeat units lie at residues Thr2277–Thr2309, Thr2325–Ser2358, and His2411–Gln2444. Asn2473, Asn2503, and Asn2522 each carry an N-linked (GlcNAc...) asparagine glycan. 7 consecutive LDL-receptor class A domains span residues Ser2524–Asn2563, Arg2566–Asn2602, Ala2605–Ser2641, Asn2639–Pro2690, Arg2696–Asn2732, Phe2734–Glu2771, and Thr2774–Leu2814. 6 disulfides stabilise this stretch: Cys2525-Cys2538, Cys2533-Cys2551, Cys2545-Cys2562, Cys2567-Cys2579, Cys2574-Cys2592, and Cys2586-Cys2601. The N-linked (GlcNAc...) asparagine glycan is linked to Asn2602. 15 cysteine pairs are disulfide-bonded: Cys2606-Cys2618, Cys2613-Cys2631, Cys2625-Cys2640, Cys2640-Cys2667, Cys2645-Cys2680, Cys2674-Cys2689, Cys2697-Cys2709, Cys2704-Cys2722, Cys2716-Cys2731, Cys2735-Cys2747, Cys2742-Cys2760, Cys2754-Cys2770, Cys2775-Cys2788, Cys2782-Cys2801, and Cys2795-Cys2813. Residues Asn2621 and Asn2639 are each glycosylated (N-linked (GlcNAc...) asparagine). An N-linked (GlcNAc...) asparagine glycan is attached at Asn2816. LDL-receptor class A domains follow at residues Thr2818–Glu2855, Thr2858–Thr2899, and Lys2904–His2941. 11 disulfide bridges follow: Cys2819/Cys2831, Cys2826/Cys2844, Cys2838/Cys2854, Cys2859/Cys2871, Cys2866/Cys2885, Cys2879/Cys2898, Cys2905/Cys2918, Cys2913/Cys2931, Cys2925/Cys2940, Cys2987/Cys2997, and Cys2993/Cys3006. Asn2906 carries an N-linked (GlcNAc...) asparagine glycan. In terms of domain architecture, EGF-like 1; calcium-binding spans Asp2983 to Asp3018. 2 N-linked (GlcNAc...) asparagine glycosylation sites follow: Asn3049 and Asn3090. LDL-receptor class B repeat units lie at residues Gln3070–Gly3114, Gly3115–Asn3157, Gly3158–Thr3201, Glu3202–Tyr3244, and Val3245–Leu3285. HAT repeat units follow at residues Glu3128–Ile3171 and Arg3224–Asn3256. Residues Asn3265 and Asn3334 are each glycosylated (N-linked (GlcNAc...) asparagine). 11 consecutive LDL-receptor class A domains span residues Asn3334 to Pro3371, Lys3374 to Asp3410, Val3413 to Pro3450, Thr3453 to Thr3491, Thr3494 to Asp3533, Thr3536 to Thr3572, Pro3575 to Thr3611, Arg3613 to Gly3649, Thr3654 to Thr3692, Gln3695 to Glu3733, and His3741 to Ser3778. 33 cysteine pairs are disulfide-bonded: Cys3335–Cys3347, Cys3342–Cys3360, Cys3354–Cys3370, Cys3375–Cys3387, Cys3382–Cys3400, Cys3394–Cys3409, Cys3414–Cys3427, Cys3421–Cys3440, Cys3434–Cys3449, Cys3454–Cys3467, Cys3461–Cys3480, Cys3474–Cys3490, Cys3495–Cys3508, Cys3502–Cys3521, Cys3515–Cys3532, Cys3537–Cys3549, Cys3544–Cys3562, Cys3556–Cys3571, Cys3576–Cys3588, Cys3583–Cys3601, Cys3595–Cys3610, Cys3614–Cys3626, Cys3621–Cys3639, Cys3633–Cys3648, Cys3655–Cys3667, Cys3662–Cys3680, Cys3674–Cys3691, Cys3696–Cys3710, Cys3704–Cys3723, Cys3717–Cys3732, Cys3742–Cys3755, Cys3750–Cys3768, and Cys3762–Cys3777. N-linked (GlcNAc...) asparagine glycosylation occurs at Asn3489. An N-linked (GlcNAc...) asparagine glycan is attached at Asn3663. Residues Asn3789 and Asn3840 are each glycosylated (N-linked (GlcNAc...) asparagine). The stretch at Gly3913–Ile3925 is one LDL-receptor class B 31 repeat. Asn3954 carries an N-linked (GlcNAc...) asparagine glycan. 3 LDL-receptor class B repeats span residues Gly3971–Arg4013, Gly4014–Asn4057, and Glu4058–Tyr4102. An HAT 10 repeat occupies Thr3995–Ile4027. N-linked (GlcNAc...) asparagine glycosylation is found at Asn4076, Asn4126, and Asn4180. 4 consecutive EGF-like domains span residues Arg4197–Asp4230, Glu4233–Thr4269, Gln4270–Asp4302, and Gln4305–Glu4341. Cystine bridges form between Cys4201–Cys4211, Cys4205–Cys4221, Cys4237–Cys4247, Cys4241–Cys4257, Cys4259–Cys4268, Cys4273–Cys4283, Cys4277–Cys4293, Cys4309–Cys4319, Cys4313–Cys4329, and Cys4331–Cys4340. N-linked (GlcNAc...) asparagine glycosylation is present at Asn4280. An N-linked (GlcNAc...) asparagine glycan is attached at Asn4365. The 35-residue stretch at Leu4376 to Glu4410 folds into the EGF-like 6 domain. Disulfide bonds link Cys4378–Cys4388, Cys4382–Cys4398, and Cys4400–Cys4409. Residues Ile4425–Tyr4445 form a helical membrane-spanning segment. Topologically, residues Lys4446–Ala4545 are cytoplasmic. The interaction with MAFB stretch occupies residues Lys4446–Ala4545. Thr4461 carries the phosphothreonine modification. Tyr4508 is modified (phosphotyrosine). 3 positions are modified to phosphoserine: Ser4518, Ser4521, and Ser4524.

This sequence belongs to the LDLR family. In terms of assembly, heterodimer of an 85-kDa membrane-bound carboxyl subunit and a non-covalently attached 515-kDa N-terminal subunit. Intracellular domain interacts with MAFB. Found in a complex with PID1/PCLI1, LRP1 and CUBNI. Interacts with SNX17, PID1/PCLI1, PDGF and CUBN. The intracellular domain interacts with SHC1, GULP1 and DAB1. Can weakly interact (via NPXY motif) with DAB2 (via PID domain); the interaction is enhanced by tyrosine phosphorylation of the NPXY motif. Interacts with MDK; promotes neuronal survival. Interacts with LRPAP1; this interaction is followed by rapid internalization. Interacts with uPA/PLAU and PAI1/SERPINE1, either individually or in complex with each other, leading to rapid endocytosis; this interaction is abolished in the presence of LRPAP1/RAP. Also interacts with tPA/PLAT alone or in complex with SERPINE1. Interacts with the urokinase receptor PLAUR; this interaction leads to PLAUR internalization and is impaired in the presence of SORL1. Interacts with PDGFB. Interacts with TAU/MAPT, leading to endocytosis; this interaction is reduced in the presence of LRPAP1/RAP. Interacts with IGFBP3. Interacts with ADGRG6. Cleaved into a 85 kDa membrane-spanning subunit (LRP-85) and a 515 kDa large extracellular domain (LRP-515) that remains non-covalently associated. Gamma-secretase-dependent cleavage of LRP-85 releases the intracellular domain from the membrane. Post-translationally, phosphorylated on serine and threonine residues. In terms of processing, phosphorylated on tyrosine residues upon stimulation with PDGF. Tyrosine phosphorylation promotes interaction with SHC1.

The protein resides in the cell membrane. It is found in the membrane. It localises to the coated pit. The protein localises to the golgi outpost. Its subcellular location is the cytoplasm. The protein resides in the cytoskeleton. It is found in the microtubule organizing center. It localises to the nucleus. In terms of biological role, endocytic receptor involved in endocytosis and in phagocytosis of apoptotic cells. Required for early embryonic development. Involved in cellular lipid homeostasis. Involved in the plasma clearance of chylomicron remnants and activated LRPAP1 (alpha 2-macroglobulin), as well as the local metabolism of complexes between plasminogen activators and their endogenous inhibitors. Acts as an LRPAP1 alpha-2-macroglobulin receptor. Acts as a TAU/MAPT receptor and controls the endocytosis of TAU/MAPT as well as its subsequent spread. May modulate cellular events, such as APP metabolism, kinase-dependent intracellular signaling, neuronal calcium signaling as well as neurotransmission. Also acts as a receptor for IGFBP3 to mediate cell growth inhibition. This Rattus norvegicus (Rat) protein is Prolow-density lipoprotein receptor-related protein 1.